Reading from the N-terminus, the 83-residue chain is Putative defensin-like protein 67 (83 aa).

Residues 1-24 form the signal peptide; that stretch reads MGSSKLMVTCIVVAMLTISCDILS. 4 disulfides stabilise this stretch: Cys-38-Cys-82, Cys-42-Cys-65, Cys-51-Cys-80, and Cys-55-Cys-81.

This sequence belongs to the DEFL family.

Its subcellular location is the secreted. This is Putative defensin-like protein 67 from Arabidopsis thaliana (Mouse-ear cress).